We begin with the raw amino-acid sequence, 165 residues long: Glutamyl-tRNA(Gln) amidotransferase subunit F, mitochondrial (165 aa).

Over residues 137–153 the composition is skewed to basic and acidic residues; that stretch reads VSDQRGERGFDTSELRT. Residues 137–165 are disordered; the sequence is VSDQRGERGFDTSELRTRINRAKSTAEKE.

This sequence belongs to the GatF family. In terms of assembly, subunit of the heterotrimeric GatFAB amidotransferase (AdT) complex, composed of A, B and F subunits.

It localises to the mitochondrion inner membrane. It carries out the reaction L-glutamyl-tRNA(Gln) + L-glutamine + ATP + H2O = L-glutaminyl-tRNA(Gln) + L-glutamate + ADP + phosphate + H(+). Functionally, allows the formation of correctly charged Gln-tRNA(Gln) through the transamidation of misacylated Glu-tRNA(Gln) in the mitochondria. The reaction takes place in the presence of glutamine and ATP through an activated gamma-phospho-Glu-tRNA(Gln). Required for proper protein synthesis within the mitochondrion. This is Glutamyl-tRNA(Gln) amidotransferase subunit F, mitochondrial from Clavispora lusitaniae (strain ATCC 42720) (Yeast).